A 902-amino-acid chain; its full sequence is HTH-type transcriptional regulator MalT (902 aa).

39–46 (SPAGYGKT) contacts ATP. Residues 830 to 895 (ELIRTSPLTQ…DAVQHAQQLL (66 aa)) enclose the HTH luxR-type domain. Residues 854–873 (NEQIAGELAVAATTIKTHIR) constitute a DNA-binding region (H-T-H motif).

It belongs to the MalT family. Monomer in solution. Oligomerizes to an active state in the presence of the positive effectors ATP and maltotriose.

Its activity is regulated as follows. Activated by ATP and maltotriose, which are both required for DNA binding. Its function is as follows. Positively regulates the transcription of the maltose regulon whose gene products are responsible for uptake and catabolism of malto-oligosaccharides. Specifically binds to the promoter region of its target genes, recognizing a short DNA motif called the MalT box. The sequence is that of HTH-type transcriptional regulator MalT from Salmonella dublin (strain CT_02021853).